The following is a 299-amino-acid chain: Coenzyme PQQ synthesis protein B (299 aa).

This sequence belongs to the PqqB family.

The protein operates within cofactor biosynthesis; pyrroloquinoline quinone biosynthesis. May be involved in the transport of PQQ or its precursor to the periplasm. In Methylorubrum populi (strain ATCC BAA-705 / NCIMB 13946 / BJ001) (Methylobacterium populi), this protein is Coenzyme PQQ synthesis protein B.